A 550-amino-acid polypeptide reads, in one-letter code: Chaperonin GroEL (550 aa).

ATP contacts are provided by residues 29 to 32 (TLGP), Lys50, 86 to 90 (DGTTT), Gly414, and Asp495.

Belongs to the chaperonin (HSP60) family. As to quaternary structure, forms a cylinder of 14 subunits composed of two heptameric rings stacked back-to-back. Interacts with the co-chaperonin GroES.

Its subcellular location is the cytoplasm. The catalysed reaction is ATP + H2O + a folded polypeptide = ADP + phosphate + an unfolded polypeptide.. In terms of biological role, together with its co-chaperonin GroES, plays an essential role in assisting protein folding. The GroEL-GroES system forms a nano-cage that allows encapsulation of the non-native substrate proteins and provides a physical environment optimized to promote and accelerate protein folding. The polypeptide is Chaperonin GroEL (Parvibaculum lavamentivorans (strain DS-1 / DSM 13023 / NCIMB 13966)).